Consider the following 326-residue polypeptide: Apoptosis facilitator Bcl-2-like protein 14 (326 aa).

A Phosphoserine modification is found at Ser-44. Positions 100 to 147 (AEKEEDSQSSPPEICAQAQRSGVPQARPRSPKWPRSRSSMDQRLEHKA) are disordered. The span at 137–147 (SSMDQRLEHKA) shows a compositional bias: basic and acidic residues. Positions 211–225 (IVELLKYSGEQLERE) match the BH3 motif. The short motif at 307–314 (WIQQHGGW) is the BH2 element.

The protein belongs to the Bcl-2 family. Phosphorylated by MELK, leading to inhibit its pro-apoptotic function.

The protein localises to the cytoplasm. Its function is as follows. Plays a role in apoptosis. The sequence is that of Apoptosis facilitator Bcl-2-like protein 14 (BCL2L14) from Bos taurus (Bovine).